Consider the following 205-residue polypeptide: Guanylate kinase (205 aa).

Residues 5-183 form the Guanylate kinase-like domain; that stretch reads GTLYTVSAPS…ALTEFRSIVV (179 aa). 12-19 lines the ATP pocket; the sequence is APSGAGKT.

Belongs to the guanylate kinase family.

Its subcellular location is the cytoplasm. The catalysed reaction is GMP + ATP = GDP + ADP. In terms of biological role, essential for recycling GMP and indirectly, cGMP. This Saccharophagus degradans (strain 2-40 / ATCC 43961 / DSM 17024) protein is Guanylate kinase.